A 361-amino-acid chain; its full sequence is Phenylalanine--tRNA ligase alpha subunit (361 aa).

Residue E260 coordinates Mg(2+).

This sequence belongs to the class-II aminoacyl-tRNA synthetase family. Phe-tRNA synthetase alpha subunit type 1 subfamily. As to quaternary structure, tetramer of two alpha and two beta subunits. Mg(2+) serves as cofactor.

The protein localises to the cytoplasm. It carries out the reaction tRNA(Phe) + L-phenylalanine + ATP = L-phenylalanyl-tRNA(Phe) + AMP + diphosphate + H(+). In Bartonella quintana (strain Toulouse) (Rochalimaea quintana), this protein is Phenylalanine--tRNA ligase alpha subunit.